The primary structure comprises 214 residues: Transcriptional regulatory protein ComA (214 aa).

Residues 3-121 (KILVIDDHPA…KITQYIYHVL (119 aa)) form the Response regulatory domain. 4-aspartylphosphate is present on aspartate 55. One can recognise an HTH luxR-type domain in the interval 147-212 (SQKEQDVLTP…EAVLIAKSDG (66 aa)). A DNA-binding region (H-T-H motif) is located at residues 171–190 (NQEIADALHLSKRSIEYSLT).

In terms of processing, phosphorylated by ComP.

The protein localises to the cytoplasm. Functionally, response regulator in the two-component regulatory system ComP/ComA involved in a major quorum response pathway that regulates the development of genetic competence. Regulates directly the expression of over 20 genes, including genes of the srfA operon, degQ, rapA, rapC, rapE, rapF, etc. Regulates indirectly, through the regulation of comK transcription, the expression of late competence genes. The sequence is that of Transcriptional regulatory protein ComA (comA) from Bacillus subtilis (strain 168).